The sequence spans 258 residues: Regulatory protein RecX (258 aa).

This sequence belongs to the RecX family.

Its subcellular location is the cytoplasm. In terms of biological role, modulates RecA activity. The polypeptide is Regulatory protein RecX (Streptococcus pneumoniae (strain 70585)).